A 670-amino-acid chain; its full sequence is Leucine-rich repeat-containing protein 45 (670 aa).

5 LRR repeats span residues 87-108, 115-136, 145-166, 173-194, and 201-223; these read TVKS…ALGK, SIRS…FSFF, FLQR…ELAM, SLQE…ALLN, and TLKK…VEQA. A coiled-coil region spans residues 234–645; sequence LSETQNRTSV…ISRMKEEEAQ (412 aa).

In terms of assembly, homomer.

Its subcellular location is the cytoplasm. It localises to the cytoskeleton. The protein localises to the microtubule organizing center. It is found in the centrosome. In terms of biological role, component of the proteinaceous fiber-like linker between two centrioles, required for centrosome cohesion. This Gallus gallus (Chicken) protein is Leucine-rich repeat-containing protein 45 (LRRC45).